The primary structure comprises 2278 residues: 1-phosphatidylinositol 3-phosphate 5-kinase FAB1 (2278 aa).

2 disordered regions span residues 1–30 (MSSE…SVNT) and 76–144 (PPTS…LQLP). At Ser2 the chain carries N-acetylserine. The segment at 2-676 (SSEEPHASIS…NSTKSFQRAQ (675 aa)) is required for localization to the vacuole membrane. Low complexity-rich tracts occupy residues 18–28 (VRSSSTGTSSV) and 76–89 (PPTS…TSTS). Polar residues predominate over residues 90–128 (HVTGTASHSNIKANANTSTSVNKKNLPPTTSGRIPSSTI). Residue Ser186 is modified to Phosphoserine. An FYVE-type zinc finger spans residues 240 to 299 (DESSKECFSCGKTFNTFRRKHHCRICGQIFCSSCTLLIDGDRFGCHAKMRVCYNCYEHAD). Cys246, Cys249, Cys262, Cys265, Cys270, Cys273, Cys291, and Cys294 together coordinate Zn(2+). Disordered stretches follow at residues 302–337 (EDSS…HSHS), 472–500 (ITIN…NNPA), 514–534 (NSVN…AQSS), 556–697 (FNYN…PNNS), and 727–766 (DSSP…NINT). Residues 472-498 (ITINNLNNTTSNNSNYNNTNSNSNINN) show a composition bias toward low complexity. Residues 557 to 570 (NYNSKGPSQQNDTA) are compositionally biased toward polar residues. Residues 571–601 (NGNNDNNNNNNNNNNNNNNNSASGIADNNNI) are compositionally biased toward low complexity. A compositionally biased stretch (polar residues) spans 602-611 (PSNDNGTTFT). A compositionally biased stretch (acidic residues) spans 634–644 (LNEEDSSEDEG). A compositionally biased stretch (polar residues) spans 665–679 (MRNSTKSFQRAQASL). Residues 682–692 (MRFRRKSKSKH) are compositionally biased toward basic residues. Positions 729 to 741 (SPLQDKASSSAAS) are enriched in polar residues. Over residues 749–763 (SNSSGSNNNSNSNSN) the composition is skewed to low complexity. A CCT domain region spans residues 766-1039 (TDPWKRIASI…KIKQVSEFMV (274 aa)). The CCR domain stretch occupies residues 1181–1500 (SSSQNLLGTG…TAKQLKKLFY (320 aa)). Over residues 1506 to 1554 (DSEDKKSLHDEKAKTRKPEKNELPLEGLKDVEKPKIDSKNTTENRDRTN) the composition is skewed to basic and acidic residues. The interval 1506-1627 (DSEDKKSLHD…TRPNIRKMSS (122 aa)) is disordered. A compositionally biased stretch (polar residues) spans 1555–1564 (EPQNAVTITT). A compositionally biased stretch (low complexity) spans 1580 to 1595 (LTVTPSASSVSSSLTP). Phosphoserine is present on residues Ser1627 and Ser1630. Over residues 1766-1776 (SGKTTASTHLN) the composition is skewed to polar residues. Disordered regions lie at residues 1766–1804 (SGKT…EPLP) and 1891–1972 (QQQQ…THSQ). Residues 1780–1799 (VVKETSENPKSIVRESDNSK) are compositionally biased toward basic and acidic residues. Positions 1918 to 1932 (DPSVNISPSVSTTSH) are enriched in polar residues. The PIPK domain maps to 1932 to 2266 (HNKGRDSEIS…RFREAMERYI (335 aa)). Position 1938 is a phosphoserine (Ser1938). Residue Thr1953 is modified to Phosphothreonine.

In terms of assembly, component of the PI(3,5)P2 regulatory complex, composed of ATG18, FIG4, FAB1, VAC14 and VAC7. VAC14 nucleates the assembly of the complex and serves as a scaffold. Mg(2+) is required as a cofactor. Requires Mn(2+) as cofactor.

The protein resides in the vacuole membrane. The protein localises to the endosome membrane. It carries out the reaction a 1,2-diacyl-sn-glycero-3-phospho-(1D-myo-inositol-3-phosphate) + ATP = a 1,2-diacyl-sn-glycero-3-phospho-(1D-myo-inositol-3,5-bisphosphate) + ADP + H(+). The catalysed reaction is 1,2-dihexadecanoyl-sn-glycero-3-phospho-(1D-myo-inositol-3-phosphate) + ATP = 1,2-dihexadecanoyl-sn-glycero-3-phospho-(1D-myo-inositol-3,5-phosphate) + ADP + H(+). Activated by VAC14 and VAC7. VAC14 acts as a specific osmotic response regulator. Functionally, the PI(3,5)P2 regulatory complex regulates both the synthesis and turnover of phosphatidylinositol 3,5-bisphosphate (PtdIns(3,5)P2). Catalyzes the phosphorylation of phosphatidylinositol 3-phosphate on the fifth hydroxyl of the myo-inositol ring, to form phosphatidylinositol 3,5-bisphosphate. Required for endocytic-vacuolar pathway and nuclear migration. The product of the reaction, PI(3,5)P2 is an important regulator of vacuole homeostasis perhaps by controlling membrane flux to and/or from the vacuole. PI(3,5)P2 regulates the transition between trans-SNARE complex formation and vacuole membrane fusion. Hyperosmotic shock-induced increase in the levels of PtdIns(3,5)P2 requires the presence of VAC7, VAC14, and/or FIG4. The polypeptide is 1-phosphatidylinositol 3-phosphate 5-kinase FAB1 (Saccharomyces cerevisiae (strain ATCC 204508 / S288c) (Baker's yeast)).